The primary structure comprises 234 residues: Sugar fermentation stimulation protein A (234 aa).

A DNA-binding region (H-T-H motif) is located at residues 201–220 (LLSEAQNKGVEVLAYKAELS).

It belongs to the SfsA family.

Binds to DNA non-specifically. Could be a regulatory factor involved in maltose metabolism. This is Sugar fermentation stimulation protein A from Salmonella typhi.